Here is a 330-residue protein sequence, read N- to C-terminus: Delta-aminolevulinic acid dehydratase (330 aa).

Residue Lys203 is the Schiff-base intermediate with substrate of the active site. Arg213 and Arg224 together coordinate 5-aminolevulinate. Glu240 lines the Mg(2+) pocket. The active-site Schiff-base intermediate with substrate is Lys255. Positions 281 and 320 each coordinate 5-aminolevulinate.

Belongs to the ALAD family. Homooctamer.

The enzyme catalyses 2 5-aminolevulinate = porphobilinogen + 2 H2O + H(+). It functions in the pathway porphyrin-containing compound metabolism; protoporphyrin-IX biosynthesis; coproporphyrinogen-III from 5-aminolevulinate: step 1/4. Catalyzes an early step in the biosynthesis of tetrapyrroles. Binds two molecules of 5-aminolevulinate per subunit, each at a distinct site, and catalyzes their condensation to form porphobilinogen. The sequence is that of Delta-aminolevulinic acid dehydratase (hemB) from Streptomyces coelicolor (strain ATCC BAA-471 / A3(2) / M145).